The chain runs to 341 residues: S-adenosylmethionine:tRNA ribosyltransferase-isomerase (341 aa).

It belongs to the QueA family. In terms of assembly, monomer.

The protein localises to the cytoplasm. It catalyses the reaction 7-aminomethyl-7-carbaguanosine(34) in tRNA + S-adenosyl-L-methionine = epoxyqueuosine(34) in tRNA + adenine + L-methionine + 2 H(+). The protein operates within tRNA modification; tRNA-queuosine biosynthesis. Transfers and isomerizes the ribose moiety from AdoMet to the 7-aminomethyl group of 7-deazaguanine (preQ1-tRNA) to give epoxyqueuosine (oQ-tRNA). The polypeptide is S-adenosylmethionine:tRNA ribosyltransferase-isomerase (Clostridium botulinum (strain Alaska E43 / Type E3)).